The sequence spans 426 residues: ORC1-type DNA replication protein 1 (426 aa).

ATP is bound by residues 62 to 66 (VGKTL), Tyr-211, and Arg-223.

Belongs to the CDC6/cdc18 family.

Functionally, involved in regulation of DNA replication. This chain is ORC1-type DNA replication protein 1 (cdc6a), found in Haloarcula marismortui (strain ATCC 43049 / DSM 3752 / JCM 8966 / VKM B-1809) (Halobacterium marismortui).